We begin with the raw amino-acid sequence, 118 residues long: Small ribosomal subunit protein uS13 (118 aa).

It belongs to the universal ribosomal protein uS13 family. As to quaternary structure, part of the 30S ribosomal subunit. Forms a loose heterodimer with protein S19. Forms two bridges to the 50S subunit in the 70S ribosome.

Its function is as follows. Located at the top of the head of the 30S subunit, it contacts several helices of the 16S rRNA. In the 70S ribosome it contacts the 23S rRNA (bridge B1a) and protein L5 of the 50S subunit (bridge B1b), connecting the 2 subunits; these bridges are implicated in subunit movement. Contacts the tRNAs in the A and P-sites. This chain is Small ribosomal subunit protein uS13, found in Carsonella ruddii (strain PV).